The primary structure comprises 209 residues: NADH-ubiquinone oxidoreductase subunit 9 (209 aa).

It belongs to the complex I 30 kDa subunit family. Complex I is composed of about 30 different subunits.

The protein localises to the mitochondrion inner membrane. It carries out the reaction a ubiquinone + NADH + 5 H(+)(in) = a ubiquinol + NAD(+) + 4 H(+)(out). In terms of biological role, core subunit of the mitochondrial membrane respiratory chain NADH dehydrogenase (Complex I) that is believed to belong to the minimal assembly required for catalysis. Complex I functions in the transfer of electrons from NADH to the respiratory chain. The immediate electron acceptor for the enzyme is believed to be ubiquinone. The polypeptide is NADH-ubiquinone oxidoreductase subunit 9 (NAD9) (Paramecium tetraurelia).